Here is a 173-residue protein sequence, read N- to C-terminus: Transcriptional repressor NrdR (173 aa).

The segment at 3–34 (CPYCGSLDTQVKDSRPTEDNTAIRRRRVCPDC) is a zinc-finger region. The ATP-cone domain occupies 49 to 139 (LMVVKRSGRR…VYRNFREARD (91 aa)).

Belongs to the NrdR family. Requires Zn(2+) as cofactor.

Negatively regulates transcription of bacterial ribonucleotide reductase nrd genes and operons by binding to NrdR-boxes. In Azorhizobium caulinodans (strain ATCC 43989 / DSM 5975 / JCM 20966 / LMG 6465 / NBRC 14845 / NCIMB 13405 / ORS 571), this protein is Transcriptional repressor NrdR.